A 196-amino-acid chain; its full sequence is Agamous-like MADS-box protein AGL27 (196 aa).

The MADS-box domain maps to 1-61 (MGRRKIEIKR…GKLYDSSSGD (61 aa)). Positions 80-170 (ALDLEEKIQN…ASQMGKNTLL (91 aa)) constitute a K-box domain. The interval 175–196 (ERGMFPGSSSGNKIPETLPLLN) is disordered.

In terms of assembly, interacts with AGL39, AGL97 and AGL74. In terms of tissue distribution, expressed in most plant tissues, embryo, seedlings, roots, leaves, stems, inflorescence, pollen, siliques and flowers.

Its subcellular location is the nucleus. Probable transcription factor involved in the negative regulation of flowering time in both long and short days, probably through the photoperiodic and vernalization pathways. Prevents premature flowering. The chain is Agamous-like MADS-box protein AGL27 (AGL27) from Arabidopsis thaliana (Mouse-ear cress).